The following is a 317-amino-acid chain: MKVLWAALLVTFLAGCQAKVEQAVEPEPEPELRQQAEWQSGQPWELALGRFWDYLRWVQTLSEQVQEELLSSQVTQELTALMDETMKELKAYRSELEEQLTPVAEETRARLSKELQAAQARLGADMEDVRGRLVQYRGEVQAMLGQSTEELRARLASHLRKLRKRLLRDADDLQKRLAVYQAGAREGAERGVSAIRERLGPLVEQGRVRAATVGSLAGQPLQERAQAWGERLRARMEEVGGRTRDRLDEVKEQVAEVRAKLEEQAQQIRLQAEAFQARLKSWFEPLVEDMQRQWAGLVEKVQAAVGTSAAPVPSDNH.

A signal peptide spans 1–18 (MKVLWAALLVTFLAGCQA). A run of 8 repeats spans residues 80-101 (ALMDETMKELKAYRSELEEQLT), 102-123 (PVAEETRARLSKELQAAQARLG), 124-145 (ADMEDVRGRLVQYRGEVQAMLG), 146-167 (QSTEELRARLASHLRKLRKRLL), 168-189 (RDADDLQKRLAVYQAGAREGAE), 190-211 (RGVSAIRERLGPLVEQGRVRAA), 212-233 (TVGSLAGQPLQERAQAWGERLR), and 234-255 (ARMEEVGGRTRDRLDEVKEQVA). Residues 80-255 (ALMDETMKEL…RLDEVKEQVA (176 aa)) form an 8 X 22 AA approximate tandem repeats region. Methionine 143 carries the post-translational modification Methionine sulfoxide. Residue serine 147 is modified to Phosphoserine. The segment at 158–168 (HLRKLRKRLLR) is LDL and other lipoprotein receptors binding. Residue 162 to 165 (LRKR) coordinates heparin. Positions 210-290 (AATVGSLAGQ…SWFEPLVEDM (81 aa)) are lipid-binding and lipoprotein association. 229 to 236 (GERLRARM) contributes to the heparin binding site. Residues 266-317 (QQIRLQAEAFQARLKSWFEPLVEDMQRQWAGLVEKVQAAVGTSAAPVPSDNH) form a homooligomerization region. The tract at residues 278-290 (RLKSWFEPLVEDM) is specificity for association with VLDL.

The protein belongs to the apolipoprotein A1/A4/E family. In terms of assembly, homotetramer. May interact with ABCA1; functionally associated with ABCA1 in the biogenesis of HDLs. May interact with APP/A4 amyloid-beta peptide; the interaction is extremely stable in vitro but its physiological significance is unclear. May interact with MAPT. May interact with MAP2. In the cerebrospinal fluid, interacts with secreted SORL1. Interacts with PMEL; this allows the loading of PMEL luminal fragment on ILVs to induce fibril nucleation. Post-translationally, APOE exists as multiple glycosylated and sialylated glycoforms within cells and in plasma. The extent of glycosylation and sialylation are tissue and context specific. In terms of processing, glycated in plasma VLDL. Phosphorylated by FAM20C in the extracellular medium.

It is found in the secreted. The protein resides in the extracellular space. Its subcellular location is the extracellular matrix. It localises to the extracellular vesicle. The protein localises to the endosome. It is found in the multivesicular body. APOE is an apolipoprotein, a protein associating with lipid particles, that mainly functions in lipoprotein-mediated lipid transport between organs via the plasma and interstitial fluids. APOE is a core component of plasma lipoproteins and is involved in their production, conversion and clearance. Apolipoproteins are amphipathic molecules that interact both with lipids of the lipoprotein particle core and the aqueous environment of the plasma. As such, APOE associates with chylomicrons, chylomicron remnants, very low density lipoproteins (VLDL) and intermediate density lipoproteins (IDL) but shows a preferential binding to high-density lipoproteins (HDL). It also binds a wide range of cellular receptors including the LDL receptor/LDLR, the LDL receptor-related proteins LRP1, LRP2 and LRP8 and the very low-density lipoprotein receptor/VLDLR that mediate the cellular uptake of the APOE-containing lipoprotein particles. Finally, APOE also has a heparin-binding activity and binds heparan-sulfate proteoglycans on the surface of cells, a property that supports the capture and the receptor-mediated uptake of APOE-containing lipoproteins by cells. A main function of APOE is to mediate lipoprotein clearance through the uptake of chylomicrons, VLDLs, and HDLs by hepatocytes. APOE is also involved in the biosynthesis by the liver of VLDLs as well as their uptake by peripheral tissues ensuring the delivery of triglycerides and energy storage in muscle, heart and adipose tissues. By participating in the lipoprotein-mediated distribution of lipids among tissues, APOE plays a critical role in plasma and tissues lipid homeostasis. APOE is also involved in two steps of reverse cholesterol transport, the HDLs-mediated transport of cholesterol from peripheral tissues to the liver, and thereby plays an important role in cholesterol homeostasis. First, it is functionally associated with ABCA1 in the biogenesis of HDLs in tissues. Second, it is enriched in circulating HDLs and mediates their uptake by hepatocytes. APOE also plays an important role in lipid transport in the central nervous system, regulating neuron survival and sprouting. This Hylobates lar (Lar gibbon) protein is Apolipoprotein E (APOE).